We begin with the raw amino-acid sequence, 255 residues long: Aliphatic sulfonates import ATP-binding protein SsuB (255 aa).

The ABC transporter domain occupies leucine 12–leucine 233. Glycine 44–serine 51 provides a ligand contact to ATP.

The protein belongs to the ABC transporter superfamily. Aliphatic sulfonates importer (TC 3.A.1.17.2) family. As to quaternary structure, the complex is composed of two ATP-binding proteins (SsuB), two transmembrane proteins (SsuC) and a solute-binding protein (SsuA).

Its subcellular location is the cell inner membrane. It carries out the reaction ATP + H2O + aliphatic sulfonate-[sulfonate-binding protein]Side 1 = ADP + phosphate + aliphatic sulfonateSide 2 + [sulfonate-binding protein]Side 1.. In terms of biological role, part of the ABC transporter complex SsuABC involved in aliphatic sulfonates import. Responsible for energy coupling to the transport system. The chain is Aliphatic sulfonates import ATP-binding protein SsuB from Escherichia coli O6:H1 (strain CFT073 / ATCC 700928 / UPEC).